Reading from the N-terminus, the 418-residue chain is 26S proteasome regulatory subunit 6B (418 aa).

Residue Met-1 is modified to N-acetylmethionine. At Ser-21 the chain carries Phosphoserine. Thr-25 is modified (phosphothreonine). Ser-28 carries the post-translational modification Phosphoserine. Gly-206–Thr-213 serves as a coordination point for ATP. 2 positions are modified to N6-acetyllysine: Lys-397 and Lys-401.

This sequence belongs to the AAA ATPase family. Component of the 19S proteasome regulatory particle complex. The 26S proteasome consists of a 20S core particle (CP) and two 19S regulatory subunits (RP). The regulatory particle is made of a lid composed of 9 subunits, a base containing 6 ATPases including PSMC4 and few additional components. Interacts with NR1I3. Interacts with PAAF1. Interacts with TRIM5. Interacts with ZFAND1.

It localises to the cytoplasm. Its subcellular location is the nucleus. Its function is as follows. Component of the 26S proteasome, a multiprotein complex involved in the ATP-dependent degradation of ubiquitinated proteins. This complex plays a key role in the maintenance of protein homeostasis by removing misfolded or damaged proteins, which could impair cellular functions, and by removing proteins whose functions are no longer required. Therefore, the proteasome participates in numerous cellular processes, including cell cycle progression, apoptosis, or DNA damage repair. PSMC4 belongs to the heterohexameric ring of AAA (ATPases associated with diverse cellular activities) proteins that unfolds ubiquitinated target proteins that are concurrently translocated into a proteolytic chamber and degraded into peptides. In Bos taurus (Bovine), this protein is 26S proteasome regulatory subunit 6B (PSMC4).